The chain runs to 526 residues: Cytochrome P450 monooxygenase milC (526 aa).

Residues 2–20 traverse the membrane as a helical segment; sequence AIHAAYIFIAATLIALYVA. Heme is bound at residue cysteine 470.

It belongs to the cytochrome P450 family. It depends on heme as a cofactor.

It is found in the membrane. The enzyme catalyses cordypyrone A + reduced [NADPH--hemoprotein reductase] + O2 = cordypyrone B + oxidized [NADPH--hemoprotein reductase] + H2O + H(+). It functions in the pathway secondary metabolite biosynthesis. Functionally, cytochrome P450 monooxygenase; part of the gene cluster that mediates the biosynthesis of cordypyrones A and B, 2 pyrones that show modest activities against pathogenic bacteria including methicillin-resistant Staphylococcus aureus (MRSA), Mycobacterium tuberculosis and Bacillus cereus. The HR-PKS milA catalyzes the formation of cordypyrones A via condensation of one acetate with 10 malonate units. Since milA lacks an enoyl reductase domain, the 2 beta-keto processing domains DH and KR of milA collaborate with the trans-enoyl reductase milB to catalyze the different levels of reduction. The cytochrome P450 monooxygenase milC then hydroxylates the C-22 of cordypyrones A to yield cordypyrones B. The polypeptide is Cytochrome P450 monooxygenase milC (Cordyceps militaris (strain CM01) (Caterpillar fungus)).